The chain runs to 298 residues: Tyrosine recombinase XerC (298 aa).

A Core-binding (CB) domain is found at 2–88 (TDLHTDVERY…ALRSFFDWLV (87 aa)). In terms of domain architecture, Tyr recombinase spans 109-288 (HLPKNIDVDD…DFQHLASVYD (180 aa)). Catalysis depends on residues arginine 148, lysine 172, histidine 240, arginine 243, and histidine 266. Tyrosine 275 serves as the catalytic O-(3'-phospho-DNA)-tyrosine intermediate.

It belongs to the 'phage' integrase family. XerC subfamily. As to quaternary structure, forms a cyclic heterotetrameric complex composed of two molecules of XerC and two molecules of XerD, in which XerC interacts with XerD via its C-terminal region, XerD interacts with XerC via its C-terminal region and so on.

It localises to the cytoplasm. With respect to regulation, ftsK may regulate the catalytic switch between XerC and XerD in the heterotetrameric complex during the two steps of the recombination process. In terms of biological role, site-specific tyrosine recombinase, which acts by catalyzing the cutting and rejoining of the recombining DNA molecules. Binds cooperatively to specific DNA consensus sequences that are separated from XerD binding sites by a short central region, forming the heterotetrameric XerC-XerD complex that recombines DNA substrates. The complex is essential to convert dimers of the bacterial chromosome into monomers to permit their segregation at cell division. It also contributes to the segregational stability of plasmids. In the complex XerC specifically exchanges the top DNA strands. The polypeptide is Tyrosine recombinase XerC (Shigella dysenteriae serotype 1 (strain Sd197)).